The sequence spans 623 residues: Leucine aminopeptidase 2 (623 aa).

Residues 136–138 and 273–278 each bind a peptide; these read QCQ and PYGGME. Residue H302 coordinates Zn(2+). E303 (proton acceptor) is an active-site residue. Zn(2+)-binding residues include H306 and E325. Residue Y390 is the Proton donor of the active site.

The protein belongs to the peptidase M1 family. Zn(2+) serves as cofactor.

It is found in the cytoplasm. It localises to the nucleus. The enzyme catalyses an epoxide + H2O = an ethanediol. Functionally, aminopeptidase that preferentially cleaves di- and tripeptides. Also has low epoxide hydrolase activity (in vitro). Can hydrolyze the epoxide leukotriene LTA(4) but it forms preferentially 5,6-dihydroxy-7,9,11,14-eicosatetraenoic acid rather than the cytokine leukotriene B(4) as the product compared to the homologous mammalian enzyme (in vitro). The chain is Leucine aminopeptidase 2 from Phaeosphaeria nodorum (strain SN15 / ATCC MYA-4574 / FGSC 10173) (Glume blotch fungus).